Here is a 494-residue protein sequence, read N- to C-terminus: Glycerol kinase (494 aa).

Thr-12 serves as a coordination point for ADP. Positions 12, 13, and 14 each coordinate ATP. Thr-12 is a binding site for sn-glycerol 3-phosphate. Arg-16 provides a ligand contact to ADP. Sn-glycerol 3-phosphate-binding residues include Arg-82, Glu-83, Tyr-134, and Asp-244. Arg-82, Glu-83, Tyr-134, Asp-244, and Gln-245 together coordinate glycerol. Residues Thr-266 and Gly-309 each coordinate ADP. The ATP site is built by Thr-266, Gly-309, Gln-313, and Gly-410. Residues Gly-410 and Asn-414 each contribute to the ADP site.

Belongs to the FGGY kinase family. In terms of assembly, homotetramer and homodimer (in equilibrium).

The enzyme catalyses glycerol + ATP = sn-glycerol 3-phosphate + ADP + H(+). Its pathway is polyol metabolism; glycerol degradation via glycerol kinase pathway; sn-glycerol 3-phosphate from glycerol: step 1/1. Its activity is regulated as follows. Activated by phosphorylation and inhibited by fructose 1,6-bisphosphate (FBP). Key enzyme in the regulation of glycerol uptake and metabolism. Catalyzes the phosphorylation of glycerol to yield sn-glycerol 3-phosphate. The chain is Glycerol kinase from Desulfitobacterium hafniense (strain DSM 10664 / DCB-2).